The sequence spans 442 residues: tRNA modification GTPase MnmE (442 aa).

Positions 24, 82, and 120 each coordinate (6S)-5-formyl-5,6,7,8-tetrahydrofolate. Residues 217–367 (GLHIVITGEP…LISLIKEKAE (151 aa)) enclose the TrmE-type G domain. Residues 227–232 (NVGKST), 246–252 (SEYAGTT), and 271–274 (DTAG) contribute to the GTP site. Positions 231 and 252 each coordinate Mg(2+). Residue lysine 442 participates in (6S)-5-formyl-5,6,7,8-tetrahydrofolate binding.

This sequence belongs to the TRAFAC class TrmE-Era-EngA-EngB-Septin-like GTPase superfamily. TrmE GTPase family. Homodimer. Heterotetramer of two MnmE and two MnmG subunits. It depends on K(+) as a cofactor.

The protein localises to the cytoplasm. Its function is as follows. Exhibits a very high intrinsic GTPase hydrolysis rate. Involved in the addition of a carboxymethylaminomethyl (cmnm) group at the wobble position (U34) of certain tRNAs, forming tRNA-cmnm(5)s(2)U34. This Wolbachia sp. subsp. Drosophila simulans (strain wRi) protein is tRNA modification GTPase MnmE.